The chain runs to 330 residues: ADP-L-glycero-D-manno-heptose-6-epimerase (330 aa).

NADP(+) contacts are provided by residues 11–12, 32–33, Q39, Q54, 75–79, and N92; these read FI, DD, and QGACA. Residue Y139 is the Proton acceptor of the active site. K143 contributes to the NADP(+) binding site. N168 serves as a coordination point for substrate. NADP(+) is bound by residues V169 and K177. The Proton acceptor role is filled by K177. Substrate contacts are provided by residues R179, H186, 200 to 203, R213, and Y292; that span reads FGEH.

The protein belongs to the NAD(P)-dependent epimerase/dehydratase family. HldD subfamily. In terms of assembly, homopentamer. The cofactor is NADP(+).

The catalysed reaction is ADP-D-glycero-beta-D-manno-heptose = ADP-L-glycero-beta-D-manno-heptose. It participates in nucleotide-sugar biosynthesis; ADP-L-glycero-beta-D-manno-heptose biosynthesis; ADP-L-glycero-beta-D-manno-heptose from D-glycero-beta-D-manno-heptose 7-phosphate: step 4/4. Its pathway is bacterial outer membrane biogenesis; LPS core biosynthesis. Functionally, catalyzes the interconversion between ADP-D-glycero-beta-D-manno-heptose and ADP-L-glycero-beta-D-manno-heptose via an epimerization at carbon 6 of the heptose. In Pseudomonas aeruginosa (strain ATCC 15692 / DSM 22644 / CIP 104116 / JCM 14847 / LMG 12228 / 1C / PRS 101 / PAO1), this protein is ADP-L-glycero-D-manno-heptose-6-epimerase.